We begin with the raw amino-acid sequence, 477 residues long: Transcription factor Sox-9-A (477 aa).

2 disordered regions span residues 1 to 66 and 157 to 274; these read MNLL…ETED and EAER…FRDV. Over residues 27 to 42 the composition is skewed to low complexity; it reads SDDSAGSPCPSGSGSD. Basic and acidic residues-rich tracts occupy residues 56 to 66 and 157 to 174; these read GDQELKKETED and EAER…DYKY. A Glycyl lysine isopeptide (Lys-Gly) (interchain with G-Cter in SUMO) cross-link involves residue K61. The interval 63 to 103 is dimerization (DIM); the sequence is ETEDEKFPVCIREAVSQVLKGYDWTLVPMPVRVNGSSKNKP. The tract at residues 63–103 is PQA; it reads ETEDEKFPVCIREAVSQVLKGYDWTLVPMPVRVNGSSKNKP. A DNA-binding region (HMG box) is located at residues 105 to 173; that stretch reads VKRPMNAFMV…QHKKDHPDYK (69 aa). Residues 211–222 show a composition bias toward low complexity; it reads SPHSSSSMSEVH. A transactivation domain (TAM) region spans residues 224 to 308; it reads PGEHSGQSQG…LPPNGHPGVG (85 aa). 2 short sequence motifs (9aaTAD) span residues 276–285 and 291–299; these read IGELSSEVIS and DVNEFDQYL. Residues 301 to 384 are disordered; the sequence is PNGHPGVGST…SDQQQQHSPQ (84 aa). 2 stretches are compositionally biased toward polar residues: residues 308–328 and 346–361; these read GSTQ…SATT and HSLS…SQQR. The transactivation domain (TAC) stretch occupies residues 361-477; the sequence is RTHIKTEQLS…QPVYTQLTRP (117 aa). K365 participates in a covalent cross-link: Glycyl lysine isopeptide (Lys-Gly) (interchain with G-Cter in SUMO). Low complexity predominate over residues 370–384; sequence SPSHYSDQQQQHSPQ. The 9aaTAD 3 signature appears at 428–436; that stretch reads SGLYSTFSY. The interval 446–477 is disordered; the sequence is TPIADTTGVPSIPQTHSPQHWEQPVYTQLTRP. A compositionally biased stretch (polar residues) spans 453-477; it reads GVPSIPQTHSPQHWEQPVYTQLTRP.

Interacts with the sumoylation factors ube2i/ubc9 and sumo1. In terms of processing, sumoylated. Lys-365 is the major site of sumoylation, although sumoylation at Lys-61 also occurs. Sumoylation plays a key role in regulating formation of the neural crest and otic placode. As to expression, from mid-gastrula (stage 10.5-11), expressed in a ring around the blastopore, with expression decreasing toward the dorsal side. At stage 12, expression around the blastopore decreases and begins to increase lateral to the neural plate in the presumptive neural crest, where expression dramatically increases around stage 14. Also expressed in the otic placode as early as stage 13/14. By the tailbud stage expression is restricted to the otic cup and then throughout the otic vesicle, with more intense staining at the dorsal-most region, the prospective region of the semicircular canals and endolymphatic duct. At the early tailbud stage (stage 23), expressed in migrating cranial neural crest cells and in the trunk neural crest. Also expressed in the genital ridges, developing eye, nasal placode and prospective pineal gland. Around stage 25, expression is down-regulated in the trunk neural crest but persists in the migrating cranial crest cells as they populate the pharyngeal arches, otic placode, developing eye, genital ridges and notochord. By stage 31, expression remains strong in the pharyngeal arches. Also expressed in the pancreas; first expressed at stage 25 in the pancreatic anlagen, dorsally in diverticulum. As development proceeds, expression continues in pancreatic tissue, being restricted to ventral and dorsal pancreatic buds.

It localises to the nucleus. Its subcellular location is the cytoplasm. Transcription factor that plays a key role in chondrocytes differentiation and skeletal development. Specifically binds the 5'-ACAAAG-3' DNA motif present in enhancers and super-enhancers and promotes expression of genes important for chondrogenesis, including COL2A1. Plays a central role in successive steps of chondrocyte differentiation. Absolutely required for precartilaginous condensation, the first step in chondrogenesis during which skeletal progenitors differentiate into prechondrocytes. Together with SOX5 and SOX6, required for overt chondrogenesis when condensed prechondrocytes differentiate into early stage chondrocytes, the second step in chondrogenesis. Later, required to direct hypertrophic maturation and block osteoblast differentiation of growth plate chondrocytes: maintains chondrocyte columnar proliferation, delays prehypertrophy and then prevents osteoblastic differentiation of chondrocytes. Also required for chondrocyte hypertrophy, both indirectly, by keeping the lineage fate of chondrocytes, and directly, by remaining present in upper hypertrophic cells. Low lipid levels are the main nutritional determinant for chondrogenic commitment of skeletal progenitor cells: when lipids levels are low, FOXO transcription factors promote expression of SOX9, which induces chondrogenic commitment and suppresses fatty acid oxidation. In addition to cartilage development, also acts as a regulator of proliferation and differentiation in epithelial stem/progenitor cells. Involved in development of the cranial neural crest, which is fated to form skeletal elements. Also required for otic placode specification during inner ear development. This Xenopus laevis (African clawed frog) protein is Transcription factor Sox-9-A (sox9-a).